Consider the following 1148-residue polypeptide: Autophagy-related protein 11 (1148 aa).

The short motif at 567–570 (FDDI) is the AIM (Atg8-family-interacting motif) element. A compositionally biased stretch (basic and acidic residues) spans 699–710 (KAEASSDVEGNK). Disordered stretches follow at residues 699-727 (KAEASSDVEGNKTHVSGSEPMDEVSCVSN), 754-777 (PLDSSMLESQQNNEKGGKDSEAGE), and 784-803 (NSSTAESPQKSLDDNVATGR). Composition is skewed to polar residues over residues 754-767 (PLDSSMLESQQNNE) and 784-793 (NSSTAESPQK). Coiled coils occupy residues 816 to 868 (ELRN…HLEN) and 956 to 996 (DKVS…VKTL). Threonine 851 is subject to Phosphothreonine. Positions 1130-1133 (YFIV) match the AIM (Atg8-family-interacting motif) motif.

Belongs to the ATG11 family. Homodimer. Interacts with ATG8E, ATG13A and ATG101. Binds to ATG8E on autophagic vesicles.

It localises to the cytoplasmic vesicle. Its subcellular location is the autophagosome. Functionally, accessory protein involved in autophagy. Acts as a scaffold protein of the ATG1-ATG13 complex for faithful delivery of autophagic vesicles to the vacuole. Involved in the stress-induced phosphorylation of ATG1A for turnover of ATG1-ATG13 complex and proper ATG1-ATG13 complex assembly or activity. Required for selective mitophagy. Required for senescence-induced breakdown of mitochondria-resident proteins and mitochondrial vesicles. Seems not essential for ATG8-mediated autophagy. The sequence is that of Autophagy-related protein 11 from Arabidopsis thaliana (Mouse-ear cress).